The chain runs to 56 residues: Ribosome modulation factor (56 aa).

Belongs to the ribosome modulation factor family.

Its subcellular location is the cytoplasm. In terms of biological role, during stationary phase, converts 70S ribosomes to an inactive dimeric form (100S ribosomes). The polypeptide is Ribosome modulation factor (Serratia proteamaculans (strain 568)).